A 176-amino-acid polypeptide reads, in one-letter code: Crossover junction endodeoxyribonuclease RuvC (176 aa).

Residues Asp7, Glu68, and Asp141 contribute to the active site. Asp7, Glu68, and Asp141 together coordinate Mg(2+).

The protein belongs to the RuvC family. Homodimer which binds Holliday junction (HJ) DNA. The HJ becomes 2-fold symmetrical on binding to RuvC with unstacked arms; it has a different conformation from HJ DNA in complex with RuvA. In the full resolvosome a probable DNA-RuvA(4)-RuvB(12)-RuvC(2) complex forms which resolves the HJ. Requires Mg(2+) as cofactor.

The protein resides in the cytoplasm. The catalysed reaction is Endonucleolytic cleavage at a junction such as a reciprocal single-stranded crossover between two homologous DNA duplexes (Holliday junction).. The RuvA-RuvB-RuvC complex processes Holliday junction (HJ) DNA during genetic recombination and DNA repair. Endonuclease that resolves HJ intermediates. Cleaves cruciform DNA by making single-stranded nicks across the HJ at symmetrical positions within the homologous arms, yielding a 5'-phosphate and a 3'-hydroxyl group; requires a central core of homology in the junction. The consensus cleavage sequence is 5'-(A/T)TT(C/G)-3'. Cleavage occurs on the 3'-side of the TT dinucleotide at the point of strand exchange. HJ branch migration catalyzed by RuvA-RuvB allows RuvC to scan DNA until it finds its consensus sequence, where it cleaves and resolves the cruciform DNA. The chain is Crossover junction endodeoxyribonuclease RuvC from Streptomyces avermitilis (strain ATCC 31267 / DSM 46492 / JCM 5070 / NBRC 14893 / NCIMB 12804 / NRRL 8165 / MA-4680).